The sequence spans 270 residues: Elongation factor Ts (270 aa).

The tract at residues 77-80 (TDFV) is involved in Mg(2+) ion dislocation from EF-Tu.

It belongs to the EF-Ts family.

It is found in the cytoplasm. Associates with the EF-Tu.GDP complex and induces the exchange of GDP to GTP. It remains bound to the aminoacyl-tRNA.EF-Tu.GTP complex up to the GTP hydrolysis stage on the ribosome. The chain is Elongation factor Ts from Nocardioides sp. (strain ATCC BAA-499 / JS614).